The sequence spans 547 residues: Delta-guaiene synthase 2 (547 aa).

3 residues coordinate Mg(2+): Asp299, Asp303, and Asp444. The short motif at 299 to 303 (DDTYD) is the DDXXD motif element.

This sequence belongs to the terpene synthase family. Requires Mg(2+) as cofactor.

It carries out the reaction (2E,6E)-farnesyl diphosphate = delta-guaiene + diphosphate. It catalyses the reaction (2E,6E)-farnesyl diphosphate = alpha-guaiene + diphosphate. It participates in secondary metabolite biosynthesis; terpenoid biosynthesis. Its function is as follows. Sesquiterpene synthase involved in the biosynthesis of delta-guaiene (53.7%) and alpha-guaiene (44.6%), two structures composed of five- and seven-membered rings. Also produces 1.7% of alpha-humulene. The chain is Delta-guaiene synthase 2 (C3) from Aquilaria crassna (Eagle wood).